The sequence spans 444 residues: ATPase PAAT (444 aa).

Phosphoserine is present on residues serine 177, serine 182, serine 254, and serine 302. The tract at residues 424–444 is disordered; it reads PSPGMPLRHYDSRERLSNGER. Residues 431 to 444 show a composition bias toward basic and acidic residues; sequence RHYDSRERLSNGER.

In terms of assembly, homodimer. Interacts with ABCB7, ABCB8/MITOSUR and ABCB10.

Its subcellular location is the cytoplasm. The protein resides in the mitochondrion. It carries out the reaction ATP + H2O = ADP + phosphate + H(+). Its function is as follows. ATPase that regulates mitochondrial ABC transporters ABCB7, ABCB8/MITOSUR and ABCB10. Regulates mitochondrial ferric concentration and heme biosynthesis and plays a role in the maintenance of mitochondrial homeostasis and cell survival. The chain is ATPase PAAT from Rattus norvegicus (Rat).